A 403-amino-acid polypeptide reads, in one-letter code: Large ribosomal subunit protein uL3 (403 aa).

Positions 1–37 are disordered; sequence MSHRKFSAPRHGSLGFLPRKRSSRHRGKVKSFPKDDP. Residue serine 13 is modified to Phosphoserine. Positions 18-31 are enriched in basic residues; the sequence is PRKRSSRHRGKVKS. A Glycyl lysine isopeptide (Lys-Gly) (interchain with G-Cter in SUMO2) cross-link involves residue lysine 39. Lysine 136 carries the post-translational modification N6-acetyllysine. Glycyl lysine isopeptide (Lys-Gly) (interchain with G-Cter in SUMO2) cross-links involve residues lysine 224 and lysine 226. Tele-methylhistidine is present on histidine 245. N6-acetyllysine; alternate is present on residues lysine 286 and lysine 294. Lysine 286 is covalently cross-linked (Glycyl lysine isopeptide (Lys-Gly) (interchain with G-Cter in SUMO2); alternate). Residue lysine 294 forms a Glycyl lysine isopeptide (Lys-Gly) (interchain with G-Cter in SUMO1); alternate linkage. At serine 304 the chain carries Phosphoserine. Lysine 366 is subject to N6-acetyllysine; alternate. A Glycyl lysine isopeptide (Lys-Gly) (interchain with G-Cter in SUMO2); alternate cross-link involves residue lysine 366. Position 373 is an N6-acetyllysine (lysine 373). Residues lysine 386, lysine 393, and lysine 399 each participate in a glycyl lysine isopeptide (Lys-Gly) (interchain with G-Cter in SUMO2) cross-link.

Belongs to the universal ribosomal protein uL3 family. In terms of assembly, component of the large ribosomal subunit. Interacts with DHX33. In terms of processing, constitutively monomethylated at His-245 by METTL18. Methylation at His-245 regulates translation elongation by slowing ribosome traversal on tyrosine codons: slower elongation provides enough time for proper folding of synthesized proteins and prevents cellular aggregation of tyrosine-rich proteins. It is not required for incorporation of RPL3 into ribosomes.

The protein localises to the nucleus. It localises to the nucleolus. It is found in the cytoplasm. In terms of biological role, component of the large ribosomal subunit. The ribosome is a large ribonucleoprotein complex responsible for the synthesis of proteins in the cell. In Rattus norvegicus (Rat), this protein is Large ribosomal subunit protein uL3 (Rpl3).